We begin with the raw amino-acid sequence, 685 residues long: DNA ligase (685 aa).

Residues 48–52, 97–98, and glutamate 131 each bind NAD(+); these read DAEYD and SL. Lysine 133 functions as the N6-AMP-lysine intermediate in the catalytic mechanism. Positions 154, 190, 304, and 328 each coordinate NAD(+). The Zn(2+) site is built by cysteine 422, cysteine 425, cysteine 440, and cysteine 445. The BRCT domain maps to 603–685; sequence PEEGPLSGRR…RLLSGEERPG (83 aa).

Belongs to the NAD-dependent DNA ligase family. LigA subfamily. Requires Mg(2+) as cofactor. It depends on Mn(2+) as a cofactor.

It carries out the reaction NAD(+) + (deoxyribonucleotide)n-3'-hydroxyl + 5'-phospho-(deoxyribonucleotide)m = (deoxyribonucleotide)n+m + AMP + beta-nicotinamide D-nucleotide.. Functionally, DNA ligase that catalyzes the formation of phosphodiester linkages between 5'-phosphoryl and 3'-hydroxyl groups in double-stranded DNA using NAD as a coenzyme and as the energy source for the reaction. It is essential for DNA replication and repair of damaged DNA. In Rubrobacter xylanophilus (strain DSM 9941 / JCM 11954 / NBRC 16129 / PRD-1), this protein is DNA ligase.